Reading from the N-terminus, the 228-residue chain is Ribosomal RNA large subunit methyltransferase E (228 aa).

S-adenosyl-L-methionine-binding residues include Gly76, Trp78, Asp99, Asp115, and Asp139. The Proton acceptor role is filled by Lys179.

This sequence belongs to the class I-like SAM-binding methyltransferase superfamily. RNA methyltransferase RlmE family.

The protein localises to the cytoplasm. It catalyses the reaction uridine(2552) in 23S rRNA + S-adenosyl-L-methionine = 2'-O-methyluridine(2552) in 23S rRNA + S-adenosyl-L-homocysteine + H(+). Its function is as follows. Specifically methylates the uridine in position 2552 of 23S rRNA at the 2'-O position of the ribose in the fully assembled 50S ribosomal subunit. This Bradyrhizobium diazoefficiens (strain JCM 10833 / BCRC 13528 / IAM 13628 / NBRC 14792 / USDA 110) protein is Ribosomal RNA large subunit methyltransferase E.